Reading from the N-terminus, the 94-residue chain is Citrate lyase acyl carrier protein (94 aa).

Ser-14 carries the O-(phosphoribosyl dephospho-coenzyme A)serine modification.

It belongs to the CitD family. As to quaternary structure, oligomer with a subunit composition of (alpha,beta,gamma)6.

The protein resides in the cytoplasm. Its function is as follows. Covalent carrier of the coenzyme of citrate lyase. The protein is Citrate lyase acyl carrier protein of Halothermothrix orenii (strain H 168 / OCM 544 / DSM 9562).